The following is a 428-amino-acid chain: MGRSQEQGQGQGPVHSIRLSTVGATRPTETGTTHEPTGLDLAMKLHYLKAAYIYSAETARDLTVRHLKEAMFMLFDQIAWTTGRFSRRDSGRPYIKCNDCGTRFVEGQCNLTVEEWLSKPDRSVDEFLVYHHPIGPELTFSPLIYVQMTRFKCGGLGLGLSWANIIGDAFSLFYAFNLWAKAITGEKIYAPTTPSIGERRFQSPNPTVKDPVSIKRVEPVGDLWVTPNDKKLANYCFNLSVADQISPHFPAKGDDSIPVFEILAGIIWKCIAKVRVEPKPVTVTIIKKDPNDLKLNAIRNSQVISSVSVDFPVAEATVEELVKAMGEAKDERCGIEEIGESCDGNLDFVVYGAKLTFLDLTGEDLYEAKVMGKSPESVYCNVEGIGEEGLVVVYAAAKSEERVVTVTLPEEEMERVKLEFKKFGLIAP.

The interval 1-36 (MGRSQEQGQGQGPVHSIRLSTVGATRPTETGTTHEP) is disordered. A compositionally biased stretch (low complexity) spans 21–36 (TVGATRPTETGTTHEP).

Belongs to the plant acyltransferase family. In terms of tissue distribution, highly expressed in leaves.

It is found in the cytoplasm. The protein localises to the cytosol. Functionally, involved in biosynthesis of the epicuticular wax. Plays a role in very-long-chain fatty acid (VLCFA) biosynthesis and is required for C30 fatty acid elongation in leaf. Despite its classification as a BAHD acyltransferase based on sequence homology, CER26 does not seem to share the catalytic mechanism of the members of the BAHD family. In Arabidopsis thaliana (Mouse-ear cress), this protein is Protein ECERIFERUM 26 (CER26).